The following is a 377-amino-acid chain: Erythronate-4-phosphate dehydrogenase (377 aa).

The substrate site is built by Ser45 and Thr66. Asp146 and Thr175 together coordinate NAD(+). Arg208 is a catalytic residue. An NAD(+)-binding site is contributed by Asp232. Glu237 is an active-site residue. The Proton donor role is filled by His254. Gly257 contributes to the NAD(+) binding site. Tyr258 is a binding site for substrate.

It belongs to the D-isomer specific 2-hydroxyacid dehydrogenase family. PdxB subfamily. As to quaternary structure, homodimer.

It localises to the cytoplasm. The catalysed reaction is 4-phospho-D-erythronate + NAD(+) = (R)-3-hydroxy-2-oxo-4-phosphooxybutanoate + NADH + H(+). The protein operates within cofactor biosynthesis; pyridoxine 5'-phosphate biosynthesis; pyridoxine 5'-phosphate from D-erythrose 4-phosphate: step 2/5. Its function is as follows. Catalyzes the oxidation of erythronate-4-phosphate to 3-hydroxy-2-oxo-4-phosphonooxybutanoate. The sequence is that of Erythronate-4-phosphate dehydrogenase from Sodalis glossinidius (strain morsitans).